The sequence spans 363 residues: Serpentine receptor class beta-18 (363 aa).

7 consecutive transmembrane segments (helical) span residues 52 to 72 (LAQF…VVYI), 92 to 112 (MLLF…YHII), 135 to 155 (FRYT…CIYI), 172 to 192 (LILA…IIWV), 218 to 238 (KATI…IGLF), 276 to 296 (AALM…YNFL), and 303 to 323 (TIAT…LVIV).

Belongs to the nematode receptor-like protein srb family.

It localises to the membrane. The polypeptide is Serpentine receptor class beta-18 (srb-18) (Caenorhabditis elegans).